The chain runs to 335 residues: DNA-directed RNA polymerase subunit alpha (335 aa).

The tract at residues 1-248 is alpha N-terminal domain (alpha-NTD); sequence MTIQTSRTLS…GLFAPLQEVS (248 aa). The alpha C-terminal domain (alpha-CTD) stretch occupies residues 256–335; that stretch reads KPDEDNQKNQ…LPRTREKGKA (80 aa).

The protein belongs to the RNA polymerase alpha chain family. In terms of assembly, in cyanobacteria the RNAP catalytic core is composed of 2 alpha, 1 beta, 1 beta', 1 gamma and 1 omega subunit. When a sigma factor is associated with the core the holoenzyme is formed, which can initiate transcription.

It catalyses the reaction RNA(n) + a ribonucleoside 5'-triphosphate = RNA(n+1) + diphosphate. In terms of biological role, DNA-dependent RNA polymerase catalyzes the transcription of DNA into RNA using the four ribonucleoside triphosphates as substrates. This chain is DNA-directed RNA polymerase subunit alpha, found in Synechococcus sp. (strain JA-2-3B'a(2-13)) (Cyanobacteria bacterium Yellowstone B-Prime).